Here is a 556-residue protein sequence, read N- to C-terminus: Arginine--tRNA ligase (556 aa).

Residues 133–143 (ANPTGPIHIGH) carry the 'HIGH' region motif.

Belongs to the class-I aminoacyl-tRNA synthetase family. Monomer.

It localises to the cytoplasm. It catalyses the reaction tRNA(Arg) + L-arginine + ATP = L-arginyl-tRNA(Arg) + AMP + diphosphate. This chain is Arginine--tRNA ligase, found in Dehalococcoides mccartyi (strain CBDB1).